We begin with the raw amino-acid sequence, 103 residues long: Ig lambda chain C region (103 aa).

The region spanning 6 to 99 (PTITLFPPSK…NGTSITKTLK (94 aa)) is the Ig-like domain. C28 and C85 are joined by a disulfide.

The protein is Ig lambda chain C region of Gallus gallus (Chicken).